Here is an 85-residue protein sequence, read N- to C-terminus: Acyl carrier protein ScoB (85 aa).

The region spanning 1–77 (MPAPLTLDGF…QWWQLLSARQ (77 aa)) is the Carrier domain. The residue at position 38 (serine 38) is an O-(pantetheine 4'-phosphoryl)serine.

Belongs to the acyl carrier protein (ACP) family. It depends on pantetheine 4'-phosphate as a cofactor.

Its pathway is lipid metabolism; fatty acid metabolism. In terms of biological role, acyl-carrier protein (ACP) involved in the biosynthesis of a unique class of isonitrile lipopeptides (INLPs). Is the dedicated ACP for the loading of activated acyl groups catalyzed by ScoC. The sequence is that of Acyl carrier protein ScoB from Streptomyces coeruleorubidus.